A 706-amino-acid chain; its full sequence is Probable rhamnogalacturonate lyase B (706 aa).

A signal peptide spans 1-19 (MRLLHPLIPASLLLTLTSA). N-linked (GlcNAc...) asparagine glycans are attached at residues N27, N40, N143, N239, N285, N380, N495, N569, N597, and N638.

It belongs to the polysaccharide lyase 4 family.

It is found in the secreted. It carries out the reaction Endotype eliminative cleavage of L-alpha-rhamnopyranosyl-(1-&gt;4)-alpha-D-galactopyranosyluronic acid bonds of rhamnogalacturonan I domains in ramified hairy regions of pectin leaving L-rhamnopyranose at the reducing end and 4-deoxy-4,5-unsaturated D-galactopyranosyluronic acid at the non-reducing end.. In terms of biological role, pectinolytic enzymes consist of four classes of enzymes: pectin lyase, polygalacturonase, pectin methylesterase and rhamnogalacturonase. Degrades the rhamnogalacturonan I (RG-I) backbone of pectin. The polypeptide is Probable rhamnogalacturonate lyase B (rglB) (Aspergillus niger (strain ATCC MYA-4892 / CBS 513.88 / FGSC A1513)).